Reading from the N-terminus, the 1041-residue chain is MKPECGQTMFRTFWSRSRDSSAMDPPLQSEEDSQTQPSLPSPLTSYRWHTGGSGEKAAGGFRWGRFAGWGRALSHQEPMVNSQPAPRSLFRRVLSAPPKESRSNRLRFSKTLWGRHKNVAPLEPKPNPKAPEPELELVADPDLPVAQIPEPPTPDMPVWNIDGFTLLEGKLVMLGEEEGPRQIRVGSASSENSMQAALGNLKDAVRTPGKTEPEAAGSNQVHNVRKLLKRLKEKKRAKSELGAYTPRDGPPSALGSRESLATLSELDLGAERDVRVWPLHPSLLGEPYCFQVTWAGGSLCFSCRSSAERDRWIEDLRRQFQPSQDNVERQEMWLTVWVHEAKGLPRATVPGVRAELWLDGALLARTAPRAGPGQLFWAERFHFEALPPARRLSLRLRSAGPAGATVGRVVLELDEVSIPRAPAAGLERWFPVLGAPAGAVLRARIRVRCLRVLPSERYKELAEFLTFHYARLCGALEPALSAQAKEELAAAMVRVLRATGRAQALVTDLGTAELARCGGREALLFRENTLATKAIDEYMKLVAQEYLQDTLGQVVRCLCASTEDCEVDPSKCPTPELPKHQARLRDSCEEVFENIIHSYNCFPAELGSVFSSWREACKARGSEALGPRLVCASLFLRLLCPAILAPSLFGLAPEHPAPGPARTLTLIAKVIQNLANCAPFGEKEAYMAFMNSFLEDHGPAMQHFLDQVATVDADTTPSGYQGSGDLALQLAVLHVQLCTIFAELDQKTQDSLEPLPTILRAIEEGRPVPVSVPMRLPRISTQVQSSFFSGEKPGFLAPRDLPKHTPLISKSQSLRSFQGAGSWASRRPDEERPQRRPRPVLRTQSVPARRPTHRRPSAGSKPRPKGSLRMGPAPCGRAWTRASASLPRKPSVPWQRQMDQPGDRYQTTGTHRPVGKLAEIQCEVAIFREAQKALSLLVESLSTQVQALKEQQEHFRCQLQDLYSRLGAGISKLDSKGGLPSNGSHRLKSLEQRLTEMECSQDQLRDSLQSLQLLSKTPGSRSQPLPLKAPCVNGADLSMGT.

The tract at residues 1–59 (MKPECGQTMFRTFWSRSRDSSAMDPPLQSEEDSQTQPSLPSPLTSYRWHTGGSGEKAAG) is disordered. A compositionally biased stretch (polar residues) spans 34–44 (QTQPSLPSPLT). Phosphoserine occurs at positions 41, 74, 187, 189, 190, 193, 239, 252, 256, and 259. Residues 218–243 (SNQVHNVRKLLKRLKEKKRAKSELGA) adopt a coiled-coil conformation. Residues 220 to 321 (QVHNVRKLLK…WIEDLRRQFQ (102 aa)) form the PH domain. A disordered region spans residues 234–256 (KKRAKSELGAYTPRDGPPSALGS). At Thr-262 the chain carries Phosphothreonine. One can recognise a C2 domain in the interval 312 to 430 (WIEDLRRQFQ…APAAGLERWF (119 aa)). A Ras-GAP domain is found at 500–708 (GRAQALVTDL…PAMQHFLDQV (209 aa)). Residues 790–910 (GEKPGFLAPR…PGDRYQTTGT (121 aa)) are disordered. Residues Ser-813 and Ser-816 each carry the phosphoserine modification. Residues 850 to 866 (RPTHRRPSAGSKPRPKG) are compositionally biased toward basic residues. The stretch at 931-1013 (QKALSLLVES…LRDSLQSLQL (83 aa)) forms a coiled coil. Residues 1016–1041 (KTPGSRSQPLPLKAPCVNGADLSMGT) form a disordered region.

As to expression, predominantly expressed in hematopoietic tissues.

The protein localises to the cytoplasm. The protein resides in the cell cortex. Functionally, functions as a Ras GTPase-activating protein. Plays an important role in the expansion and functions of natural killer T (NKT) cells in the liver by negatively regulating RAS activity and the down-stream ERK signaling pathway. The protein is RAS protein activator like-3 (Rasal3) of Mus musculus (Mouse).